A 475-amino-acid polypeptide reads, in one-letter code: NADH-quinone oxidoreductase subunit N (475 aa).

14 helical membrane-spanning segments follow: residues 5–25 (LALP…FGVV), 32–52 (FLSC…LVVM), 71–91 (FMKI…VGYA), 99–119 (FEFP…ASSE), 121–141 (LMTL…LCAF), 155–175 (YFVL…LVYG), 193–213 (STAV…GLTF), 232–252 (PTSV…ALLL), 266–286 (WQIL…LAAI), 294–314 (LMAY…CAGT), 322–342 (LVYL…IIAM), 366–386 (ATAM…AGFF), 389–409 (MMVF…IGVV), and 439–459 (LSLS…LLVL).

This sequence belongs to the complex I subunit 2 family. In terms of assembly, NDH-1 is composed of 14 different subunits. Subunits NuoA, H, J, K, L, M, N constitute the membrane sector of the complex.

It is found in the cell inner membrane. The enzyme catalyses a quinone + NADH + 5 H(+)(in) = a quinol + NAD(+) + 4 H(+)(out). Functionally, NDH-1 shuttles electrons from NADH, via FMN and iron-sulfur (Fe-S) centers, to quinones in the respiratory chain. The immediate electron acceptor for the enzyme in this species is believed to be ubiquinone. Couples the redox reaction to proton translocation (for every two electrons transferred, four hydrogen ions are translocated across the cytoplasmic membrane), and thus conserves the redox energy in a proton gradient. In Gluconacetobacter diazotrophicus (strain ATCC 49037 / DSM 5601 / CCUG 37298 / CIP 103539 / LMG 7603 / PAl5), this protein is NADH-quinone oxidoreductase subunit N.